A 315-amino-acid polypeptide reads, in one-letter code: MDVGVTTAKSILEKPLKLLTEEDISQLTREDCRKFLKEKGMRRPSWNKSQAIQQVLSLKALYEPGDDSGAGILRKILVSQPPNPPRVTTTLIEPRNELEACGRIPLQEDDGACHRRDSPRSAEFSGSSGQFVADKDSHKTVSVSPRSPAETNAVVGQMTIFYSGKVNVYDGVPPEKARSIMHFAANPIDLPENGIFASSRMISKPMSKEKMVELPQYGLEKAPASRDSDVEGQANRKVSLQRYLEKRKDRRFSKTKKAPGVASSSLEMFLNRQPRMNAAYSQNLSGTGHCESPENQTKSPNISVDLNSDLNSEDN.

The interval 113–145 is disordered; sequence CHRRDSPRSAEFSGSSGQFVADKDSHKTVSVSP. A Tify domain is found at 151 to 186; the sequence is TNAVVGQMTIFYSGKVNVYDGVPPEKARSIMHFAAN. Residues 233-260 carry the Jas motif; the sequence is QANRKVSLQRYLEKRKDRRFSKTKKAPG. The Nuclear localization signal motif lies at 235–242; that stretch reads NRKVSLQR. Over residues 248-257 the composition is skewed to basic residues; that stretch reads KDRRFSKTKK. The disordered stretch occupies residues 248–315; the sequence is KDRRFSKTKK…LNSDLNSEDN (68 aa). Positions 293–315 are enriched in polar residues; it reads PENQTKSPNISVDLNSDLNSEDN.

This sequence belongs to the TIFY/JAZ family. Interacts with AFPH2/NINJA.

The protein localises to the nucleus. Regulates the arrest of dispersed meristematic cells during lamina development. The protein is Protein TIFY 4B (TIFY4B) of Arabidopsis thaliana (Mouse-ear cress).